A 131-amino-acid chain; its full sequence is Small ribosomal subunit protein eS8 (131 aa).

The interval 11–36 (DLKKPSGGKKGRVRKTKKKALCGGPP) is disordered. Basic residues predominate over residues 16 to 30 (SGGKKGRVRKTKKKA).

The protein belongs to the eukaryotic ribosomal protein eS8 family. In terms of assembly, part of the 30S ribosomal subunit.

This is Small ribosomal subunit protein eS8 from Pyrobaculum islandicum (strain DSM 4184 / JCM 9189 / GEO3).